The chain runs to 481 residues: Putative amino-acid transporter CPE0389 (481 aa).

The next 13 membrane-spanning stretches (helical) occupy residues 7–27 (LGVIALAGVVISAMLGGGVYN), 36–56 (ASAGAILISWIITGIGIWFIA), 87–107 (FLMAWGYWICNSFANVGYAVL), 127–147 (LSIACGSLVLWIIFFIVLAGV), 156–176 (IGTIGKLLPLAIFLLVLLFSF), 208–228 (STMLVTLWVFTGIEGAVVVSG), 241–261 (FLGFITCLLIYTLLSLLPLGV), 289–309 (VIMNLGVIIAILSSWLIWTVM), 338–358 (FSLLASTIIMQIILILVHFAG), 364–384 (MLSITSVMALPCYLVSTLYLF), 401–421 (RKYAMITAILGSIYGVWLIYA), 422–442 (AGINYMLIAIVIYALGIPVFI), and 461–481 (YFAIVLIILALIGLVYLFKFM).

Belongs to the amino acid-polyamine-organocation (APC) superfamily. Basic amino acid/polyamine antiporter (APA) (TC 2.A.3.2) family.

It localises to the cell membrane. Could be an amino acid transporter. The chain is Putative amino-acid transporter CPE0389 from Clostridium perfringens (strain 13 / Type A).